Here is a 185-residue protein sequence, read N- to C-terminus: HTH-type transcriptional regulator Hpr (185 aa).

In terms of domain architecture, HTH marR-type spans 13 to 157; that stretch reads AMIFSQRIAQ…LIAILRNIYG (145 aa). The H-T-H motif DNA-binding region spans 63–86; it reads ISEIAKFGVMHVSTAFNFSKKLEE.

Homodimer.

In terms of biological role, negative regulator of protease production and sporulation. In Bacillus mycoides (strain KBAB4) (Bacillus weihenstephanensis), this protein is HTH-type transcriptional regulator Hpr.